The following is a 375-amino-acid chain: Succinyl-diaminopimelate desuccinylase (375 aa).

Position 66 (His66) interacts with Zn(2+). Residue Asp68 is part of the active site. Asp99 is a Zn(2+) binding site. The active-site Proton acceptor is Glu133. Positions 134, 162, and 348 each coordinate Zn(2+).

It belongs to the peptidase M20A family. DapE subfamily. Homodimer. Requires Zn(2+) as cofactor. Co(2+) serves as cofactor.

The catalysed reaction is N-succinyl-(2S,6S)-2,6-diaminopimelate + H2O = (2S,6S)-2,6-diaminopimelate + succinate. It participates in amino-acid biosynthesis; L-lysine biosynthesis via DAP pathway; LL-2,6-diaminopimelate from (S)-tetrahydrodipicolinate (succinylase route): step 3/3. Its function is as follows. Catalyzes the hydrolysis of N-succinyl-L,L-diaminopimelic acid (SDAP), forming succinate and LL-2,6-diaminopimelate (DAP), an intermediate involved in the bacterial biosynthesis of lysine and meso-diaminopimelic acid, an essential component of bacterial cell walls. The polypeptide is Succinyl-diaminopimelate desuccinylase (Cronobacter sakazakii (strain ATCC BAA-894) (Enterobacter sakazakii)).